A 581-amino-acid chain; its full sequence is Amino-acid acetyltransferase, mitochondrial (581 aa).

The region spanning 401–558 is the N-acetyltransferase domain; that stretch reads FTLHNLIEDE…RIVGSEAVNI (158 aa).

This sequence belongs to the acetyltransferase family.

It is found in the mitochondrion. It catalyses the reaction L-glutamate + acetyl-CoA = N-acetyl-L-glutamate + CoA + H(+). Its pathway is amino-acid biosynthesis; L-arginine biosynthesis; N(2)-acetyl-L-ornithine from L-glutamate: step 1/4. N-acetylglutamate synthase involved in arginine biosynthesis. The protein is Amino-acid acetyltransferase, mitochondrial (ARG2) of Scheffersomyces stipitis (strain ATCC 58785 / CBS 6054 / NBRC 10063 / NRRL Y-11545) (Yeast).